The sequence spans 802 residues: Phenylalanine--tRNA ligase beta subunit (802 aa).

Residues Ala-39–Phe-154 form the tRNA-binding domain. Residues Thr-407 to Thr-482 enclose the B5 domain. Mg(2+)-binding residues include Asp-460, Asp-466, Glu-469, and Glu-470. In terms of domain architecture, FDX-ACB spans Thr-709–Arg-802.

It belongs to the phenylalanyl-tRNA synthetase beta subunit family. Type 1 subfamily. As to quaternary structure, tetramer of two alpha and two beta subunits. The cofactor is Mg(2+).

It localises to the cytoplasm. The catalysed reaction is tRNA(Phe) + L-phenylalanine + ATP = L-phenylalanyl-tRNA(Phe) + AMP + diphosphate + H(+). The chain is Phenylalanine--tRNA ligase beta subunit from Streptococcus thermophilus (strain CNRZ 1066).